A 161-amino-acid chain; its full sequence is Allophycocyanin beta subunit (161 aa).

At Asn-71 the chain carries N4-methylasparagine. Cys-81 contacts (2R,3E)-phycocyanobilin.

Belongs to the phycobiliprotein family. In terms of assembly, heterodimer of an alpha and a beta chain. Post-translationally, contains one covalently linked phycocyanobilin chromophore. The chromophore is added by the phycocyanobilin lyase CpcUS.

The protein localises to the cellular thylakoid membrane. Functionally, light-harvesting photosynthetic bile pigment-protein from the phycobiliprotein complex. Allophycocyanin has a maximum absorption at approximately 650 nanometers. The sequence is that of Allophycocyanin beta subunit (apcB) from Picosynechococcus sp. (strain ATCC 27264 / PCC 7002 / PR-6) (Agmenellum quadruplicatum).